Here is a 104-residue protein sequence, read N- to C-terminus: Flagellar hook-basal body complex protein FliE (104 aa).

This sequence belongs to the FliE family.

Its subcellular location is the bacterial flagellum basal body. The protein is Flagellar hook-basal body complex protein FliE of Salmonella arizonae (strain ATCC BAA-731 / CDC346-86 / RSK2980).